Consider the following 395-residue polypeptide: Digeranylgeranylglycerophospholipid reductase (395 aa).

FAD-binding residues include alanine 15, aspartate 34, cysteine 45, alanine 46, glycine 48, arginine 97, alanine 121, aspartate 276, and glycine 288. 2 residues coordinate a 2,3-bis-O-(geranylgeranyl)-sn-glycerol 1-phospholipid: arginine 329 and glycine 365.

The protein belongs to the geranylgeranyl reductase family. DGGGPL reductase subfamily. It depends on FAD as a cofactor.

It carries out the reaction a 2,3-bis-O-phytanyl-sn-glycerol 1-phospholipid + 8 A = a 2,3-bis-O-(geranylgeranyl)-sn-glycerol 1-phospholipid + 8 AH2. The enzyme catalyses 2,3-bis-O-(phytanyl)-sn-glycerol 1-phosphate + 8 A = 2,3-bis-O-(geranylgeranyl)-sn-glycerol 1-phosphate + 8 AH2. It catalyses the reaction CDP-2,3-bis-O-(geranylgeranyl)-sn-glycerol + 8 AH2 = CDP-2,3-bis-O-(phytanyl)-sn-glycerol + 8 A. The catalysed reaction is archaetidylserine + 8 AH2 = 2,3-bis-O-phytanyl-sn-glycero-3-phospho-L-serine + 8 A. Its pathway is membrane lipid metabolism; glycerophospholipid metabolism. Functionally, is involved in the reduction of 2,3-digeranylgeranylglycerophospholipids (unsaturated archaeols) into 2,3-diphytanylglycerophospholipids (saturated archaeols) in the biosynthesis of archaeal membrane lipids. Catalyzes the formation of archaetidic acid (2,3-di-O-phytanyl-sn-glyceryl phosphate) from 2,3-di-O-geranylgeranylglyceryl phosphate (DGGGP) via the hydrogenation of each double bond of the isoprenoid chains. Is also probably able to reduce double bonds of geranyl groups in CDP-2,3-bis-O-(geranylgeranyl)-sn-glycerol and archaetidylserine, thus acting at various stages in the biosynthesis of archaeal membrane lipids. In Thermococcus gammatolerans (strain DSM 15229 / JCM 11827 / EJ3), this protein is Digeranylgeranylglycerophospholipid reductase.